Reading from the N-terminus, the 222-residue chain is Deoxyribose-phosphate aldolase (222 aa).

Asp-93 acts as the Proton donor/acceptor in catalysis. Lys-156 serves as the catalytic Schiff-base intermediate with acetaldehyde. Lys-186 functions as the Proton donor/acceptor in the catalytic mechanism.

The protein belongs to the DeoC/FbaB aldolase family. DeoC type 1 subfamily.

The protein localises to the cytoplasm. It catalyses the reaction 2-deoxy-D-ribose 5-phosphate = D-glyceraldehyde 3-phosphate + acetaldehyde. It functions in the pathway carbohydrate degradation; 2-deoxy-D-ribose 1-phosphate degradation; D-glyceraldehyde 3-phosphate and acetaldehyde from 2-deoxy-alpha-D-ribose 1-phosphate: step 2/2. Its function is as follows. Catalyzes a reversible aldol reaction between acetaldehyde and D-glyceraldehyde 3-phosphate to generate 2-deoxy-D-ribose 5-phosphate. The sequence is that of Deoxyribose-phosphate aldolase from Nocardia farcinica (strain IFM 10152).